The chain runs to 449 residues: tRNA-2-methylthio-N(6)-dimethylallyladenosine synthase (449 aa).

One can recognise an MTTase N-terminal domain in the interval 7–124 (DAFYIHTFGC…LPLLIKQVQQ (118 aa)). Residues C16, C52, C87, C163, C167, and C170 each coordinate [4Fe-4S] cluster. One can recognise a Radical SAM core domain in the interval 149–379 (RSSSMSAFVP…IECQNRISAS (231 aa)). The TRAM domain maps to 382–445 (SQAVGSVVEV…SATLLGEPLI (64 aa)).

It belongs to the methylthiotransferase family. MiaB subfamily. As to quaternary structure, monomer. The cofactor is [4Fe-4S] cluster.

The protein resides in the cytoplasm. The enzyme catalyses N(6)-dimethylallyladenosine(37) in tRNA + (sulfur carrier)-SH + AH2 + 2 S-adenosyl-L-methionine = 2-methylsulfanyl-N(6)-dimethylallyladenosine(37) in tRNA + (sulfur carrier)-H + 5'-deoxyadenosine + L-methionine + A + S-adenosyl-L-homocysteine + 2 H(+). In terms of biological role, catalyzes the methylthiolation of N6-(dimethylallyl)adenosine (i(6)A), leading to the formation of 2-methylthio-N6-(dimethylallyl)adenosine (ms(2)i(6)A) at position 37 in tRNAs that read codons beginning with uridine. This chain is tRNA-2-methylthio-N(6)-dimethylallyladenosine synthase, found in Chlorobium chlorochromatii (strain CaD3).